Reading from the N-terminus, the 218-residue chain is Large ribosomal subunit protein uL3 (218 aa).

Belongs to the universal ribosomal protein uL3 family. In terms of assembly, part of the 50S ribosomal subunit. Forms a cluster with proteins L14 and L19.

Functionally, one of the primary rRNA binding proteins, it binds directly near the 3'-end of the 23S rRNA, where it nucleates assembly of the 50S subunit. The protein is Large ribosomal subunit protein uL3 of Corynebacterium aurimucosum (strain ATCC 700975 / DSM 44827 / CIP 107346 / CN-1) (Corynebacterium nigricans).